A 127-amino-acid chain; its full sequence is Holo-[acyl-carrier-protein] synthase (127 aa).

Aspartate 9 and glutamate 58 together coordinate Mg(2+).

Belongs to the P-Pant transferase superfamily. AcpS family. Mg(2+) is required as a cofactor.

The protein localises to the cytoplasm. The enzyme catalyses apo-[ACP] + CoA = holo-[ACP] + adenosine 3',5'-bisphosphate + H(+). Its function is as follows. Transfers the 4'-phosphopantetheine moiety from coenzyme A to a Ser of acyl-carrier-protein. This chain is Holo-[acyl-carrier-protein] synthase, found in Shewanella putrefaciens (strain CN-32 / ATCC BAA-453).